Here is a 114-residue protein sequence, read N- to C-terminus: Probable divalent-cation tolerance protein cutA homolog (114 aa).

The protein belongs to the CutA family. Homotrimer.

The chain is Probable divalent-cation tolerance protein cutA homolog from Encephalitozoon cuniculi (strain GB-M1) (Microsporidian parasite).